The following is a 426-amino-acid chain: LIM/homeobox protein Lhx2 (426 aa).

Residues 14–24 (VIDEMDRRQER) are compositionally biased toward basic and acidic residues. The tract at residues 14–42 (VIDEMDRRQERGSGISSAIDRGDTETTMP) is disordered. LIM zinc-binding domains lie at 52–104 (CAGC…CKED) and 114–167 (CARC…CRLH). Positions 248-268 (DAEHLDRDQPYPSSQKTKRMR) are disordered. The segment at residues 264 to 323 (TKRMRTSFKHHQLRTMKSYFAINHNPDAKDLKQLAQKTGLTKRVLQVWFQNARAKFRRNL) is a DNA-binding region (homeobox). The Nuclear localization signal motif lies at 305–321 (KRVLQVWFQNARAKFRR). Polar residues predominate over residues 326–354 (QENTGVDKTSDATLQTGTPSGPASELSNA). The disordered stretch occupies residues 326-370 (QENTGVDKTSDATLQTGTPSGPASELSNASLSPSSTPTTLTDLTS). Low complexity predominate over residues 355 to 370 (SLSPSSTPTTLTDLTS).

As to quaternary structure, interacts (via LIM domains) with CITED2. Interacts with POU4F2. As to expression, found in discrete regions of the developing CNS, primarily in diencephalic and telencephalic structures and a subset of lymphoid tissues. Also found in embryonic spinal cord and fetal liver.

It is found in the nucleus. Its function is as follows. Acts as a transcriptional activator. Stimulates the promoter of the alpha-glycoprotein gene. Transcriptional regulatory protein involved in the control of cell differentiation in developing lymphoid and neural cell types. This is LIM/homeobox protein Lhx2 (Lhx2) from Rattus norvegicus (Rat).